Reading from the N-terminus, the 581-residue chain is Chaotic nuclear migration protein 67 (581 aa).

Residues S17, S20, S72, S85, and S89 each carry the phosphoserine modification. The interval 86-150 (YQESPGLQER…PTDEHTSPDI (65 aa)) is disordered. A compositionally biased stretch (basic and acidic residues) spans 94–114 (ERPKNEKDKSPIGTDVHKKDV). S151 carries the post-translational modification Phosphoserine. Coiled-coil stretches lie at residues 179-252 (LGYQ…DTIQ), 306-363 (FLCA…LSKQ), and 373-451 (KLTI…NTSE).

In terms of assembly, interacts directly with ADY3 and YOR129C. Interacts with ADY4. Probable component of a SPB complex composed of ADY3, SSP1, DON1, MPC54, SPO21/MPC70, NUD1 and CNM67. In terms of processing, phosphorylated in its N-terminal part.

The protein localises to the cytoplasm. It localises to the cytoskeleton. Its subcellular location is the microtubule organizing center. The protein resides in the spindle pole body. Involved in the pathway that organizes the shaping and sizing of the prospore membrane (PSM) during sporulation. Required for the proper formation of the spindle pole body (SPB) outer plaque. May connect the outer plaque to the central plaque embedded in the nuclear envelope. The protein is Chaotic nuclear migration protein 67 (CNM67) of Saccharomyces cerevisiae (strain ATCC 204508 / S288c) (Baker's yeast).